Consider the following 186-residue polypeptide: UPF0301 protein APL_0232 (186 aa).

Belongs to the UPF0301 (AlgH) family.

The protein is UPF0301 protein APL_0232 of Actinobacillus pleuropneumoniae serotype 5b (strain L20).